A 316-amino-acid chain; its full sequence is Olfactory receptor 10A7 (316 aa).

The Extracellular portion of the chain corresponds to 1–25; that stretch reads MICENHTRVTEFILLGFTNNPEMQV. N-linked (GlcNAc...) asparagine glycosylation is present at asparagine 5. The chain crosses the membrane as a helical span at residues 26-46; that stretch reads SLFIFFLAIYTVTLLGNFLIV. Over 47-54 the chain is Cytoplasmic; sequence TVTSVDLA. The helical transmembrane segment at 55–75 threads the bilayer; the sequence is LQTPMYFFLQNLSLLEVCFTL. Topologically, residues 76-99 are extracellular; the sequence is VMVPKMLVDLVSPRKIISFVGCGT. Residues 100–120 form a helical membrane-spanning segment; it reads QMYFFFFFGSSECFLLSMMAY. Residues 121 to 139 are Cytoplasmic-facing; sequence DRFVAICNPLHYSVIMNRS. The helical transmembrane segment at 140 to 160 threads the bilayer; the sequence is LCLWMAIGSWMSGVPVSMLQT. Over 161–197 the chain is Extracellular; the sequence is AWMMALPFCGPNAVDHFFCDGPPVLKLVTVDTTMYEM. Residues 198–217 traverse the membrane as a helical segment; it reads QALASTLLFIMFPFCLILVS. Residues 218–237 are Cytoplasmic-facing; the sequence is YTRIIITILRMSSATGRQKA. A helical membrane pass occupies residues 238-258; sequence FSTCSSHLIVVSLFYGTASLT. At 259-271 the chain is on the extracellular side; the sequence is YLRPKSNQSPESK. A helical membrane pass occupies residues 272-292; that stretch reads KLVSLSYTVITPMLNPIIYGL. The Cytoplasmic portion of the chain corresponds to 293–316; that stretch reads RNNEVKGAVKRTITQKVLQKLDVF.

The protein belongs to the G-protein coupled receptor 1 family.

It is found in the cell membrane. In terms of biological role, odorant receptor. This Homo sapiens (Human) protein is Olfactory receptor 10A7 (OR10A7).